The sequence spans 271 residues: Tryptophan synthase alpha chain (271 aa).

Active-site proton acceptor residues include Glu49 and Asp60.

The protein belongs to the TrpA family. As to quaternary structure, tetramer of two alpha and two beta chains.

It carries out the reaction (1S,2R)-1-C-(indol-3-yl)glycerol 3-phosphate + L-serine = D-glyceraldehyde 3-phosphate + L-tryptophan + H2O. The protein operates within amino-acid biosynthesis; L-tryptophan biosynthesis; L-tryptophan from chorismate: step 5/5. In terms of biological role, the alpha subunit is responsible for the aldol cleavage of indoleglycerol phosphate to indole and glyceraldehyde 3-phosphate. The protein is Tryptophan synthase alpha chain of Burkholderia multivorans (strain ATCC 17616 / 249).